We begin with the raw amino-acid sequence, 338 residues long: N-acetyl-gamma-glutamyl-phosphate reductase (338 aa).

Cys-148 is a catalytic residue.

It belongs to the NAGSA dehydrogenase family. Type 1 subfamily.

It is found in the cytoplasm. The enzyme catalyses N-acetyl-L-glutamate 5-semialdehyde + phosphate + NADP(+) = N-acetyl-L-glutamyl 5-phosphate + NADPH + H(+). The protein operates within amino-acid biosynthesis; L-arginine biosynthesis; N(2)-acetyl-L-ornithine from L-glutamate: step 3/4. Catalyzes the NADPH-dependent reduction of N-acetyl-5-glutamyl phosphate to yield N-acetyl-L-glutamate 5-semialdehyde. The polypeptide is N-acetyl-gamma-glutamyl-phosphate reductase (Leptospira interrogans serogroup Icterohaemorrhagiae serovar Lai (strain 56601)).